A 520-amino-acid polypeptide reads, in one-letter code: Alkyl hydroperoxide reductase subunit F (520 aa).

213–228 (DVLVVGGGPAGAAAAI) contributes to the FAD binding site. An intrachain disulfide couples C343 to C346. 355–369 (RVAVIGGGNSGVEAA) provides a ligand contact to NAD(+). 476-486 (TSIPGVFAAGD) provides a ligand contact to FAD.

Belongs to the class-II pyridine nucleotide-disulfide oxidoreductase family. In terms of assembly, homodimer. The cofactor is FAD.

Serves to protect the cell against DNA damage by alkyl hydroperoxides. It can use either NADH or NADPH as electron donor for direct reduction of redox dyes or of alkyl hydroperoxides when combined with the AhpC protein. The polypeptide is Alkyl hydroperoxide reductase subunit F (ahpF) (Pseudomonas putida (Arthrobacter siderocapsulatus)).